The following is a 596-amino-acid chain: Probable ATP-dependent RNA helicase DDX52 (596 aa).

At Lys-15 the chain carries N6-acetyllysine. Ser-39 is modified (phosphoserine). The segment at 68-94 is disordered; the sequence is LPDEEKTEESQIERKKQNRKKKKITSE. Positions 163-191 match the Q motif motif; that stretch reads QLDQEYKINSRLLQNILDAGFQTPTPIQM. The Helicase ATP-binding domain maps to 194–372; sequence IPVMLHGREL…RLNLDSVITV (179 aa). 207–214 contacts ATP; that stretch reads APTGSGKT. Residues 316-319 carry the DEAD box motif; the sequence is DESD. In terms of domain architecture, Helicase C-terminal spans 383–544; it reads TVEQELLFVG…PVPEYIKGFQ (162 aa). A disordered region spans residues 575–596; the sequence is AKDKRKKVTGQNKKKVAPEDKS. Basic residues predominate over residues 577 to 589; sequence DKRKKVTGQNKKK.

It belongs to the DEAD box helicase family. DDX52/ROK1 subfamily.

The protein resides in the nucleus. It localises to the nucleolus. It carries out the reaction ATP + H2O = ADP + phosphate + H(+). The protein is Probable ATP-dependent RNA helicase DDX52 (DDX52) of Bos taurus (Bovine).